Reading from the N-terminus, the 471-residue chain is 3-isopropylmalate dehydratase large subunit (471 aa).

[4Fe-4S] cluster contacts are provided by Cys-347, Cys-407, and Cys-410.

This sequence belongs to the aconitase/IPM isomerase family. LeuC type 1 subfamily. As to quaternary structure, heterodimer of LeuC and LeuD. [4Fe-4S] cluster serves as cofactor.

The catalysed reaction is (2R,3S)-3-isopropylmalate = (2S)-2-isopropylmalate. Its pathway is amino-acid biosynthesis; L-leucine biosynthesis; L-leucine from 3-methyl-2-oxobutanoate: step 2/4. In terms of biological role, catalyzes the isomerization between 2-isopropylmalate and 3-isopropylmalate, via the formation of 2-isopropylmaleate. This chain is 3-isopropylmalate dehydratase large subunit, found in Granulibacter bethesdensis (strain ATCC BAA-1260 / CGDNIH1).